Consider the following 769-residue polypeptide: Zinc finger protein 585B (769 aa).

Over residues methionine 1–serine 12 the composition is skewed to polar residues. A disordered region spans residues methionine 1–tyrosine 23. The region spanning valine 27–proline 97 is the KRAB domain. 21 consecutive C2H2-type zinc fingers follow at residues tyrosine 158–histidine 180, tyrosine 186–histidine 208, tyrosine 214–histidine 236, histidine 242–histidine 264, tyrosine 270–histidine 292, tyrosine 298–histidine 320, serine 354–histidine 376, tyrosine 382–histidine 404, tyrosine 410–histidine 432, tyrosine 438–histidine 460, tyrosine 466–histidine 488, tyrosine 494–histidine 516, tyrosine 522–histidine 544, tyrosine 550–histidine 572, tyrosine 578–histidine 600, tyrosine 606–histidine 628, tyrosine 634–histidine 656, tyrosine 662–histidine 684, tyrosine 690–histidine 712, tyrosine 718–histidine 740, and tyrosine 746–histidine 768.

Belongs to the krueppel C2H2-type zinc-finger protein family.

It localises to the nucleus. In terms of biological role, may be involved in transcriptional regulation. The sequence is that of Zinc finger protein 585B (ZNF585B) from Pongo abelii (Sumatran orangutan).